Consider the following 68-residue polypeptide: DNA gyrase inhibitor YacG (68 aa).

Cys14, Cys17, Cys29, and Cys33 together coordinate Zn(2+).

This sequence belongs to the DNA gyrase inhibitor YacG family. As to quaternary structure, interacts with GyrB. The cofactor is Zn(2+).

In terms of biological role, inhibits all the catalytic activities of DNA gyrase by preventing its interaction with DNA. Acts by binding directly to the C-terminal domain of GyrB, which probably disrupts DNA binding by the gyrase. This is DNA gyrase inhibitor YacG from Azorhizobium caulinodans (strain ATCC 43989 / DSM 5975 / JCM 20966 / LMG 6465 / NBRC 14845 / NCIMB 13405 / ORS 571).